A 320-amino-acid chain; its full sequence is Cytochrome f (320 aa).

Positions 1–35 are cleaved as a signal peptide; sequence MQTRNAFSWIKKEITRSISVLLMIYIITRAPISNA. Heme-binding residues include Tyr-36, Cys-56, Cys-59, and His-60. A helical transmembrane segment spans residues 286-305; sequence VQGLLLFLASIILAQIFLVL.

The protein belongs to the cytochrome f family. In terms of assembly, the 4 large subunits of the cytochrome b6-f complex are cytochrome b6, subunit IV (17 kDa polypeptide, petD), cytochrome f and the Rieske protein, while the 4 small subunits are PetG, PetL, PetM and PetN. The complex functions as a dimer. Heme serves as cofactor.

It is found in the plastid. Its subcellular location is the chloroplast thylakoid membrane. Functionally, component of the cytochrome b6-f complex, which mediates electron transfer between photosystem II (PSII) and photosystem I (PSI), cyclic electron flow around PSI, and state transitions. This chain is Cytochrome f (petA), found in Vicia faba (Broad bean).